The primary structure comprises 382 residues: Flap endonuclease 1 (382 aa).

The segment at 1-104 (MGIKGLSQVI…GELEKRTERR (104 aa)) is N-domain. Position 34 (Asp34) interacts with Mg(2+). Residues Arg47 and Arg70 each contribute to the DNA site. Mg(2+) contacts are provided by Asp86, Glu158, Glu160, Asp179, and Asp181. The I-domain stretch occupies residues 122 to 253 (EAEKFERRLV…KKAVELIKQH (132 aa)). DNA is bound at residue Glu158. Residues Gly231 and Asp233 each coordinate DNA. Mg(2+) is bound at residue Asp233. The interval 336–344 (TQGRIDSFF) is interaction with PCNA. Positions 359 to 368 (KAQEEAEKMK) are enriched in basic and acidic residues. The tract at residues 359 to 382 (KAQEEAEKMKKGGKKSGPPKKKAK) is disordered. Residues 369–382 (KGGKKSGPPKKKAK) are compositionally biased toward basic residues.

Belongs to the XPG/RAD2 endonuclease family. FEN1 subfamily. Interacts with PCNA. Three molecules of crn-1 bind to one PCNA trimer with each molecule binding to one PCNA monomer. PCNA stimulates the nuclease activity without altering cleavage specificity. Mg(2+) is required as a cofactor. In terms of processing, phosphorylated. Phosphorylation upon DNA damage induces relocalization to the nuclear plasma.

It localises to the nucleus. Its subcellular location is the nucleolus. The protein resides in the nucleoplasm. It is found in the mitochondrion. In terms of biological role, structure-specific nuclease with 5'-flap endonuclease and 5'-3' exonuclease activities involved in DNA replication and repair. During DNA replication, cleaves the 5'-overhanging flap structure that is generated by displacement synthesis when DNA polymerase encounters the 5'-end of a downstream Okazaki fragment. It enters the flap from the 5'-end and then tracks to cleave the flap base, leaving a nick for ligation. Also involved in the long patch base excision repair (LP-BER) pathway, by cleaving within the apurinic/apyrimidinic (AP) site-terminated flap. Acts as a genome stabilization factor that prevents flaps from equilibrating into structures that lead to duplications and deletions. Also possesses 5'-3' exonuclease activity on nicked or gapped double-stranded DNA, and exhibits RNase H activity. Also involved in replication and repair of rDNA and in repairing mitochondrial DNA. The polypeptide is Flap endonuclease 1 (Caenorhabditis briggsae).